Here is a 534-residue protein sequence, read N- to C-terminus: MKWVEKYAPKKLGDVLGNAKAKAQIEVWANKWSKGVPQKPLLLMGPPGIGKTTIAHLVGKEYFSETIEVNASDKRSYDIIKSSIGEAAQTRSLFHSGYKLLIMDEVDGISGRDDSGGARAVNETIKNSKQPIILMANDAYSKRLTSIKPKCQGIKFTKVHTNSINAQLKRICAREDIEYDSEALYTLSKESNGDLRSAITSLEAIVDNDKKITKDSLSVIAKKDGEQNIFDTVVAVLKSKNPEHVAEAMRVNTQPPFLIELIAENIPREYERTNEIVKAYEMISLADVNLGRAFRTQNYTYWKYAFLFMGRGVAAAKKQTYKKFSRIITPTIYTKLSKSRKNRNLKEQVTQKMSLKLHTSPKELEKQLVFYEELFKDNEQAYDLKQYFKLTDDEVKLFRSRKIPASVEKKRLTKLRKEQELEEKEIQKQKIIDAKKVELKEESKNKKEIKVKTKKDTVEDSSKTKSTTKSKKTSKSTPTKKVTKTKKSSNSTTKNKTESPKNSSKTSSKTSVDDKKTSKKNNKKKSRQTTLFDF.

45–52 (GPPGIGKT) contacts ATP. The span at 444–463 (KNKKEIKVKTKKDTVEDSSK) shows a compositional bias: basic and acidic residues. A disordered region spans residues 444–534 (KNKKEIKVKT…KSRQTTLFDF (91 aa)). Residues 488-510 (SSNSTTKNKTESPKNSSKTSSKT) show a composition bias toward low complexity. The span at 517–527 (TSKKNNKKKSR) shows a compositional bias: basic residues.

The protein belongs to the activator 1 small subunits family. RfcL subfamily. Heteromultimer composed of small subunits (RfcS) and large subunits (RfcL).

Functionally, part of the RFC clamp loader complex which loads the PCNA sliding clamp onto DNA. This is Replication factor C large subunit from Methanosphaera stadtmanae (strain ATCC 43021 / DSM 3091 / JCM 11832 / MCB-3).